The chain runs to 302 residues: Oxygen-dependent coproporphyrinogen-III oxidase (302 aa).

Ser94 is a binding site for substrate. Positions 98 and 108 each coordinate a divalent metal cation. The Proton donor role is filled by His108. 110–112 lines the substrate pocket; it reads NVR. Positions 147 and 177 each coordinate a divalent metal cation. The segment at 242–277 is important for dimerization; that stretch reads YVEFNLVYDRGTLFGLQTGGRTESILMSMPPLVRWQ. 260–262 contacts substrate; the sequence is GGR.

The protein belongs to the aerobic coproporphyrinogen-III oxidase family. In terms of assembly, homodimer. Requires a divalent metal cation as cofactor.

It localises to the cytoplasm. The enzyme catalyses coproporphyrinogen III + O2 + 2 H(+) = protoporphyrinogen IX + 2 CO2 + 2 H2O. It participates in porphyrin-containing compound metabolism; protoporphyrin-IX biosynthesis; protoporphyrinogen-IX from coproporphyrinogen-III (O2 route): step 1/1. Its function is as follows. Involved in the heme biosynthesis. Catalyzes the aerobic oxidative decarboxylation of propionate groups of rings A and B of coproporphyrinogen-III to yield the vinyl groups in protoporphyrinogen-IX. The chain is Oxygen-dependent coproporphyrinogen-III oxidase from Shewanella sp. (strain ANA-3).